Consider the following 1764-residue polypeptide: Cilia- and flagella-associated protein 44 (1764 aa).

WD repeat units lie at residues 115-157, 160-199, 208-248, 255-294, 361-400, 454-493, and 495-534; these read GTER…IVLR, AFSQ…TGLK, GNVE…VVLT, CHDG…DAEP, HPAG…VLAE, AHKG…QPGT, and VPGM…GVLL. Positions 570-654 are disordered; it reads QLVVPKPKRP…GGPSSTTGEL (85 aa). Residues 575-584 are compositionally biased toward basic residues; sequence KPKRPKKKKG. Basic and acidic residues-rich tracts occupy residues 585–596 and 604–628; these read KNDGEEGDKEGG and GEDK…GRAA. A compositionally biased stretch (acidic residues) spans 629 to 641; it reads EEEEEEEADDEAD. WD repeat units follow at residues 649–692, 707–752, and 753–791; these read STTG…PLAA, AHAG…LHDM, and QSGR…ELAP. Residues 821 to 850 are a coiled coil; the sequence is YTLEEEKQQAERDQQVREAEEKKLSVRQRL. Disordered stretches follow at residues 972–1003 and 1426–1468; these read AAAG…GDAA and KKKA…CPPG. A compositionally biased stretch (acidic residues) spans 1434–1462; it reads GEDDYDSEEDEEDEDMGDDEVDDDDDGGE. Coiled-coil stretches lie at residues 1479 to 1517, 1567 to 1674, and 1729 to 1758; these read DLRE…LVEQ, LVFS…DAKI, and EERD…LRRK.

It belongs to the CFAP44 family.

The protein resides in the cell projection. It localises to the cilium. Its subcellular location is the flagellum. It is found in the cytoplasm. The protein localises to the cytoskeleton. The protein resides in the flagellum axoneme. Flagellar protein involved in sperm flagellum axoneme organization and function. The chain is Cilia- and flagella-associated protein 44 from Chlamydomonas reinhardtii (Chlamydomonas smithii).